We begin with the raw amino-acid sequence, 538 residues long: Putative cysteine ligase BshC (538 aa).

Positions 460 to 484 (KINEQIELLERMLKRNVEKKHEVEL) form a coiled coil.

It belongs to the BshC family.

Functionally, involved in bacillithiol (BSH) biosynthesis. May catalyze the last step of the pathway, the addition of cysteine to glucosamine malate (GlcN-Mal) to generate BSH. This chain is Putative cysteine ligase BshC, found in Bacillus cereus (strain ATCC 10987 / NRS 248).